We begin with the raw amino-acid sequence, 712 residues long: Polyribonucleotide nucleotidyltransferase (712 aa).

Residues Asp487 and Asp493 each contribute to the Mg(2+) site. In terms of domain architecture, KH spans 554–613 (PRIEVMNIPVDKIREVIGSGGKVIREIVEKTGAKINIEDDGTVKIASSSGKEIEAARKWI). Residues 623 to 691 (GQIYEGTVVK…ERGKVRLSMK (69 aa)) form the S1 motif domain.

Belongs to the polyribonucleotide nucleotidyltransferase family. Mg(2+) is required as a cofactor.

Its subcellular location is the cytoplasm. The enzyme catalyses RNA(n+1) + phosphate = RNA(n) + a ribonucleoside 5'-diphosphate. Its function is as follows. Involved in mRNA degradation. Catalyzes the phosphorolysis of single-stranded polyribonucleotides processively in the 3'- to 5'-direction. This is Polyribonucleotide nucleotidyltransferase from Rhizobium leguminosarum bv. trifolii (strain WSM2304).